The following is a 327-amino-acid chain: Opticin (327 aa).

Residues 1–19 (MKLPAFLSLLALVLLEAGT) form the signal peptide. Sulfotyrosine is present on residues Y61 and Y67. In terms of domain architecture, LRRNT spans 111 to 148 (VLGSPNSHGLPTCLICVCLGSSVYCDDADLENIPPLPK). LRR repeat units follow at residues 149–170 (TTTYLYARFNRIRRIRAGDFKG), 173–194 (KLKRIDLSSNSISSIDDDALRL), 197–218 (ALQDLILPENQLAALPALPPAI), 219–237 (EVLDARHNQLQSSGIQPEA), 243–263 (KLQFLYLADNLLDSIPGPLPP), 264–285 (SLRSLHLQNNLIETMQTDAFCD), and 295–315 (WLEDIRLDGNPINLGLFPSAY). The cysteines at positions 284 and 317 are disulfide-linked.

It belongs to the small leucine-rich proteoglycan (SLRP) family. SLRP class III subfamily. Homodimer. Post-translationally, O-glycosylated. Proteolytically cleaved by MMP1, MMP2, MMP3, MMP7, MMP8, MMP9, ADAMTS4, and ADAMTS5. Proteolytically cleaved by MMP13. In terms of processing, sulfated on tyrosine residues. As to expression, ocular tissues, cartilage, ligament, skin, muscle and testes.

Its subcellular location is the secreted. It localises to the extracellular space. It is found in the extracellular matrix. Functionally, inhibits angiogenesis in the vitreous humor of the eye, and therefore represses neovascularization. Binds collagen fibrils. May be involved in collagen fiber organization via regulation of other members of the small leucine-rich repeat proteoglycan superfamily. The protein is Opticin (OPTC) of Canis lupus familiaris (Dog).